Consider the following 1100-residue polypeptide: Regulator of nonsense transcripts 1 (1100 aa).

The segment covering 42–53 (SQTQTQGQTQSQ) has biased composition (low complexity). A disordered region spans residues 42–67 (SQTQTQGQTQSQLDNQVNGPDGVLPN). The 158-residue stretch at 94–251 (TKDLPVHACS…NKLEELWKEN (158 aa)) folds into the Upf1 CH-rich domain. 12 residues coordinate Zn(2+): C102, C105, C116, S119, C124, H134, H138, C144, C162, C165, C188, and C192. Residues 102–134 (CSYCGIHDPACVVYCNTSKKWFCNGRGNTSGSH) form a C3H region. The interval 116-144 (CNTSKKWFCNGRGNTSGSHIVNHLVRAKC) is CC/SHH/C. The tract at residues 162 to 192 (CYNCGCRNVFLLGFIPAKADSVVVLLCRQPC) is C4. ATP contacts are provided by residues Q455, 475 to 479 (GTGKT), Q645, Y682, and E813. Residues 978-1065 (LGQVNGPAAG…QPELSQDSYL (88 aa)) form a disordered region. Positions 982-993 (NGPAAGRGAPKG) are enriched in low complexity. Residues 1012–1063 (SGQPNMPNSQASQDLVSQPFSQGPLTQGYITMSQPSQMSQPGLSQPELSQDS) show a composition bias toward polar residues.

The protein belongs to the DNA2/NAM7 helicase family.

It localises to the cytoplasm. Its subcellular location is the P-body. The protein resides in the nucleus. The protein localises to the perinuclear region. RNA-dependent helicase and ATPase required for nonsense-mediated decay (NMD) of mRNAs containing premature stop codons. Is recruited to mRNAs upon translation termination and undergoes a cycle of phosphorylation and dephosphorylation; its phosphorylation appears to be a key step in NMD. The formation of an upf1-upf2-upf3 surveillance complex is believed to activate NMD. This is Regulator of nonsense transcripts 1 from Danio rerio (Zebrafish).